A 343-amino-acid chain; its full sequence is MQEIVIPLKEKSYKVFLGELPEIELKQKALIISDSIVAGLHLSYLLKRLKALEVRVCVIESGEKYKNFHSLERILNNAFEMQLNRHSLMIALGGGVISDMVGFASSIYFRGIDFINIPTTLLAQVDASVGGKTGINTPYGKNLIGSFHQPKAVYIDLAFLKTLEKREFQAGVAEIIKMAVCFDKNLVERLEMKDLKDCLEEVIFQSVNIKAQVVMQDEKEQNIRAGLNYGHTFGHAIEKETDYERFLHGEAIAIGMRMANDLALSLGMLTLKEYERIENLLEKFDLIFHYKIIDIQKFYERLFLDKKSENKTIKFILPKGIGAFEVASHIPKETILKVLEKWH.

NAD(+)-binding positions include 61-66, 95-99, 119-120, Lys-132, Lys-141, and 159-162; these read SGEKYK, GVISD, TT, and FLKT. The Zn(2+) site is built by Glu-174, His-231, and His-248.

Belongs to the sugar phosphate cyclases superfamily. Dehydroquinate synthase family. The cofactor is Co(2+). Requires Zn(2+) as cofactor. It depends on NAD(+) as a cofactor.

It localises to the cytoplasm. It catalyses the reaction 7-phospho-2-dehydro-3-deoxy-D-arabino-heptonate = 3-dehydroquinate + phosphate. It participates in metabolic intermediate biosynthesis; chorismate biosynthesis; chorismate from D-erythrose 4-phosphate and phosphoenolpyruvate: step 2/7. Catalyzes the conversion of 3-deoxy-D-arabino-heptulosonate 7-phosphate (DAHP) to dehydroquinate (DHQ). The protein is 3-dehydroquinate synthase of Helicobacter pylori (strain P12).